The following is a 94-amino-acid chain: Defensin-7 (94 aa).

An N-terminal signal peptide occupies residues 1–19; the sequence is MRTLTLLSAFLLVALQAWA. 2 disulfides stabilise this stretch: Cys-65–Cys-93 and Cys-72–Cys-92.

This sequence belongs to the alpha-defensin family.

The protein localises to the secreted. In terms of biological role, has antimicrobial activity. The polypeptide is Defensin-7 (DEFA7) (Pan troglodytes (Chimpanzee)).